The sequence spans 372 residues: Putative glutamate--cysteine ligase 2 (372 aa).

Belongs to the glutamate--cysteine ligase type 2 family. YbdK subfamily. In terms of assembly, homodimer.

It carries out the reaction L-cysteine + L-glutamate + ATP = gamma-L-glutamyl-L-cysteine + ADP + phosphate + H(+). In terms of biological role, ATP-dependent carboxylate-amine ligase which exhibits weak glutamate--cysteine ligase activity. The polypeptide is Putative glutamate--cysteine ligase 2 (Citrobacter koseri (strain ATCC BAA-895 / CDC 4225-83 / SGSC4696)).